Consider the following 382-residue polypeptide: GDP-mannose 4,6 dehydratase 2 (382 aa).

NADP(+)-binding positions include 40–45 (GITGQD), 97–98 (DM), 119–123 (LAAQS), and Tyr134. Residue Thr166 is part of the active site. Catalysis depends on nucleophile residues Glu168 and Tyr190. NADP(+)-binding residues include Lys194, His220, and Arg225.

The protein belongs to the NAD(P)-dependent epimerase/dehydratase family. GDP-mannose 4,6-dehydratase subfamily. Requires NADP(+) as cofactor.

It carries out the reaction GDP-alpha-D-mannose = GDP-4-dehydro-alpha-D-rhamnose + H2O. It functions in the pathway nucleotide-sugar biosynthesis; GDP-L-fucose biosynthesis via de novo pathway; GDP-L-fucose from GDP-alpha-D-mannose: step 1/2. Functionally, catalyzes the conversion of GDP-D-mannose to GDP-4-dehydro-6-deoxy-D-mannose. This chain is GDP-mannose 4,6 dehydratase 2 (gmd-2), found in Caenorhabditis elegans.